The primary structure comprises 141 residues: Hemoglobin subunit alpha-3 (141 aa).

Positions 1–141 constitute a Globin domain; that stretch reads VLSPADKTNV…VSTVLTSKYR (141 aa). His-58 contacts O2. A heme b-binding site is contributed by His-87.

Belongs to the globin family. Heterotetramer of two alpha chains and two beta chains. In terms of tissue distribution, red blood cells.

In terms of biological role, involved in oxygen transport from the lung to the various peripheral tissues. In Gorilla gorilla gorilla (Western lowland gorilla), this protein is Hemoglobin subunit alpha-3.